Reading from the N-terminus, the 238-residue chain is Pyridoxine 5'-phosphate synthase (238 aa).

Residue asparagine 7 coordinates 3-amino-2-oxopropyl phosphate. 9-10 (DH) is a 1-deoxy-D-xylulose 5-phosphate binding site. Residue arginine 18 participates in 3-amino-2-oxopropyl phosphate binding. Histidine 43 serves as the catalytic Proton acceptor. Residues arginine 45 and histidine 50 each coordinate 1-deoxy-D-xylulose 5-phosphate. Residue glutamate 70 is the Proton acceptor of the active site. Position 100 (threonine 100) interacts with 1-deoxy-D-xylulose 5-phosphate. Histidine 190 (proton donor) is an active-site residue. Residues glycine 191 and 212 to 213 (GH) contribute to the 3-amino-2-oxopropyl phosphate site.

The protein belongs to the PNP synthase family. As to quaternary structure, homooctamer; tetramer of dimers.

The protein localises to the cytoplasm. The enzyme catalyses 3-amino-2-oxopropyl phosphate + 1-deoxy-D-xylulose 5-phosphate = pyridoxine 5'-phosphate + phosphate + 2 H2O + H(+). It participates in cofactor biosynthesis; pyridoxine 5'-phosphate biosynthesis; pyridoxine 5'-phosphate from D-erythrose 4-phosphate: step 5/5. In terms of biological role, catalyzes the complicated ring closure reaction between the two acyclic compounds 1-deoxy-D-xylulose-5-phosphate (DXP) and 3-amino-2-oxopropyl phosphate (1-amino-acetone-3-phosphate or AAP) to form pyridoxine 5'-phosphate (PNP) and inorganic phosphate. This chain is Pyridoxine 5'-phosphate synthase, found in Prochlorococcus marinus (strain MIT 9312).